A 558-amino-acid chain; its full sequence is Urocanate hydratase (558 aa).

NAD(+) contacts are provided by residues 50 to 51 (GG), Q128, 174 to 176 (GMG), E194, R199, 240 to 241 (NA), 261 to 265 (QTSAH), 271 to 272 (YI), and Y320. C408 is an active-site residue. G490 provides a ligand contact to NAD(+).

The protein belongs to the urocanase family. Requires NAD(+) as cofactor.

It is found in the cytoplasm. It carries out the reaction 4-imidazolone-5-propanoate = trans-urocanate + H2O. Its pathway is amino-acid degradation; L-histidine degradation into L-glutamate; N-formimidoyl-L-glutamate from L-histidine: step 2/3. Its function is as follows. Catalyzes the conversion of urocanate to 4-imidazolone-5-propionate. The protein is Urocanate hydratase of Deinococcus radiodurans (strain ATCC 13939 / DSM 20539 / JCM 16871 / CCUG 27074 / LMG 4051 / NBRC 15346 / NCIMB 9279 / VKM B-1422 / R1).